The following is a 265-amino-acid chain: Sulfur carrier protein FdhD (265 aa).

Cysteine 107 (cysteine persulfide intermediate) is an active-site residue.

This sequence belongs to the FdhD family.

It is found in the cytoplasm. In terms of biological role, required for formate dehydrogenase (FDH) activity. Acts as a sulfur carrier protein that transfers sulfur from IscS to the molybdenum cofactor prior to its insertion into FDH. This is Sulfur carrier protein FdhD from Staphylococcus aureus (strain JH9).